The sequence spans 217 residues: Serine acetyltransferase (217 aa).

Belongs to the transferase hexapeptide repeat family.

The protein resides in the cytoplasm. It catalyses the reaction L-serine + acetyl-CoA = O-acetyl-L-serine + CoA. Its pathway is amino-acid biosynthesis; L-cysteine biosynthesis; L-cysteine from L-serine: step 1/2. With respect to regulation, inhibited by cysteine. In terms of biological role, catalyzes the acetylation of serine by acetyl-CoA to produce O-acetylserine (OAS). The sequence is that of Serine acetyltransferase (cysE) from Bacillus subtilis (strain 168).